A 422-amino-acid polypeptide reads, in one-letter code: Glutamate-1-semialdehyde 2,1-aminomutase (422 aa).

Lys265 is subject to N6-(pyridoxal phosphate)lysine.

The protein belongs to the class-III pyridoxal-phosphate-dependent aminotransferase family. HemL subfamily. Pyridoxal 5'-phosphate is required as a cofactor.

It localises to the cytoplasm. The catalysed reaction is (S)-4-amino-5-oxopentanoate = 5-aminolevulinate. Its pathway is porphyrin-containing compound metabolism; protoporphyrin-IX biosynthesis; 5-aminolevulinate from L-glutamyl-tRNA(Glu): step 2/2. In Methanococcoides burtonii (strain DSM 6242 / NBRC 107633 / OCM 468 / ACE-M), this protein is Glutamate-1-semialdehyde 2,1-aminomutase.